The chain runs to 252 residues: Phosphate import ATP-binding protein PstB 1 (252 aa).

Residues 6–247 form the ABC transporter domain; that stretch reads ISSKDLHLYY…PKEKQTEDYI (242 aa). ATP is bound at residue 38–45; the sequence is GPSGCGKS.

The protein belongs to the ABC transporter superfamily. Phosphate importer (TC 3.A.1.7) family. In terms of assembly, the complex is composed of two ATP-binding proteins (PstB), two transmembrane proteins (PstC and PstA) and a solute-binding protein (PstS).

The protein resides in the cell membrane. It carries out the reaction phosphate(out) + ATP + H2O = ADP + 2 phosphate(in) + H(+). Functionally, part of the ABC transporter complex PstSACB involved in phosphate import. Responsible for energy coupling to the transport system. The sequence is that of Phosphate import ATP-binding protein PstB 1 from Enterococcus faecalis (strain ATCC 700802 / V583).